The primary structure comprises 203 residues: Large ribosomal subunit protein bL25 (203 aa).

The tract at residues 1 to 21 (MMENLQVNQREKKTRHSSRQC) is disordered. Residues 12–21 (KKTRHSSRQC) show a composition bias toward basic residues.

Belongs to the bacterial ribosomal protein bL25 family. CTC subfamily. As to quaternary structure, part of the 50S ribosomal subunit; part of the 5S rRNA/L5/L18/L25 subcomplex. Contacts the 5S rRNA. Binds to the 5S rRNA independently of L5 and L18.

Its function is as follows. This is one of the proteins that binds to the 5S RNA in the ribosome where it forms part of the central protuberance. The protein is Large ribosomal subunit protein bL25 of Clostridium perfringens (strain 13 / Type A).